The following is a 216-amino-acid chain: Pyrrolidone-carboxylate peptidase (216 aa).

Residues Glu80, Cys143, and His168 contribute to the active site.

The protein belongs to the peptidase C15 family. In terms of assembly, homotetramer.

It localises to the cytoplasm. The catalysed reaction is Release of an N-terminal pyroglutamyl group from a polypeptide, the second amino acid generally not being Pro.. Functionally, removes 5-oxoproline from various penultimate amino acid residues except L-proline. The polypeptide is Pyrrolidone-carboxylate peptidase (Cupriavidus pinatubonensis (strain JMP 134 / LMG 1197) (Cupriavidus necator (strain JMP 134))).